Reading from the N-terminus, the 375-residue chain is MQCEFFIQKRCTSCHQCAQPYSQQVENKDQQLRELIAPAMDVQWLPPVTSADTAFRNKAKMVVLGAAHAPILGIEDAQGQPLSLVTCPLYPQPMQELLAYLENWIRIAGIPPYNKLKKKGELKFILLTRSENSGQFMLRFVARSHAVLERIERNLPTLIAAFPTIEVVSVNIQPVHMARLEGEEEIFLTETQSLLEQFNDVPMVIRPKSFFQTNPQVAEQLYATARAWVREIAPTQMWDLFCGVGGFALHCAAPNTAVTGIEIEPEAIASAQRSAQMMGIDNLSFAALDSAKFSQSQMSAPELVLVNPPRRGLGSELTAQLEALAPQHILYSSCNPQTMVKDIAELASYQMSRVQWFDMFPHTDHAEVLTLLVRK.

Cys-3, Cys-11, Cys-14, and Cys-87 together coordinate [4Fe-4S] cluster. Residues Gln-212, Phe-241, Glu-262, and Asn-307 each contribute to the S-adenosyl-L-methionine site. Residue Cys-334 is the Nucleophile of the active site.

It belongs to the class I-like SAM-binding methyltransferase superfamily. RNA M5U methyltransferase family. RlmC subfamily.

It catalyses the reaction uridine(747) in 23S rRNA + S-adenosyl-L-methionine = 5-methyluridine(747) in 23S rRNA + S-adenosyl-L-homocysteine + H(+). In terms of biological role, catalyzes the formation of 5-methyl-uridine at position 747 (m5U747) in 23S rRNA. The protein is 23S rRNA (uracil(747)-C(5))-methyltransferase RlmC of Vibrio cholerae serotype O1 (strain ATCC 39541 / Classical Ogawa 395 / O395).